Consider the following 476-residue polypeptide: Ribosomal RNA small subunit methyltransferase F (476 aa).

S-adenosyl-L-methionine-binding positions include A124–K130, E148, D175, and D193. Catalysis depends on C246, which acts as the Nucleophile.

The protein belongs to the class I-like SAM-binding methyltransferase superfamily. RsmB/NOP family.

The protein resides in the cytoplasm. It catalyses the reaction cytidine(1407) in 16S rRNA + S-adenosyl-L-methionine = 5-methylcytidine(1407) in 16S rRNA + S-adenosyl-L-homocysteine + H(+). Specifically methylates the cytosine at position 1407 (m5C1407) of 16S rRNA. This is Ribosomal RNA small subunit methyltransferase F from Photobacterium profundum (strain SS9).